The chain runs to 142 residues: MARVTVEDCVEKVPNRFELVMMAAQRARDIAAGSPLSVDRDNDKNPVVALREIADETVTLETLRNSLIKGHQRVPEQDEPEEEIVELMAGENAWSVPEAGGDEGGDASELLDDEGEGAAAGAEPDFSEMDVPLADLADEDKI.

Positions 93–142 are disordered; sequence AWSVPEAGGDEGGDASELLDDEGEGAAAGAEPDFSEMDVPLADLADEDKI. Residues 100–116 are compositionally biased toward acidic residues; the sequence is GGDEGGDASELLDDEGE.

Belongs to the RNA polymerase subunit omega family. As to quaternary structure, the RNAP catalytic core consists of 2 alpha, 1 beta, 1 beta' and 1 omega subunit. When a sigma factor is associated with the core the holoenzyme is formed, which can initiate transcription.

The catalysed reaction is RNA(n) + a ribonucleoside 5'-triphosphate = RNA(n+1) + diphosphate. Functionally, promotes RNA polymerase assembly. Latches the N- and C-terminal regions of the beta' subunit thereby facilitating its interaction with the beta and alpha subunits. This chain is DNA-directed RNA polymerase subunit omega, found in Rhodospirillum centenum (strain ATCC 51521 / SW).